Consider the following 362-residue polypeptide: Phosphoserine aminotransferase (362 aa).

L-glutamate is bound at residue Arg42. Residues 76 to 77, Trp102, Thr153, Asp174, and Gln197 contribute to the pyridoxal 5'-phosphate site; that span reads AR. N6-(pyridoxal phosphate)lysine is present on Lys198. Residue 239 to 240 coordinates pyridoxal 5'-phosphate; that stretch reads NT.

It belongs to the class-V pyridoxal-phosphate-dependent aminotransferase family. SerC subfamily. As to quaternary structure, homodimer. It depends on pyridoxal 5'-phosphate as a cofactor.

It localises to the cytoplasm. It carries out the reaction O-phospho-L-serine + 2-oxoglutarate = 3-phosphooxypyruvate + L-glutamate. It catalyses the reaction 4-(phosphooxy)-L-threonine + 2-oxoglutarate = (R)-3-hydroxy-2-oxo-4-phosphooxybutanoate + L-glutamate. It functions in the pathway amino-acid biosynthesis; L-serine biosynthesis; L-serine from 3-phospho-D-glycerate: step 2/3. The protein operates within cofactor biosynthesis; pyridoxine 5'-phosphate biosynthesis; pyridoxine 5'-phosphate from D-erythrose 4-phosphate: step 3/5. In terms of biological role, catalyzes the reversible conversion of 3-phosphohydroxypyruvate to phosphoserine and of 3-hydroxy-2-oxo-4-phosphonooxybutanoate to phosphohydroxythreonine. The protein is Phosphoserine aminotransferase of Proteus mirabilis (strain HI4320).